The following is a 338-amino-acid chain: Lipoate-protein ligase A (338 aa).

Positions 29–216 (PATQRVLFLW…AFFAHYGERV (188 aa)) constitute a BPL/LPL catalytic domain. Residues Arg71, 76 to 79 (GAVF), and Lys134 each bind ATP. Lys134 contacts (R)-lipoate.

This sequence belongs to the LplA family. As to quaternary structure, monomer.

It is found in the cytoplasm. It catalyses the reaction L-lysyl-[lipoyl-carrier protein] + (R)-lipoate + ATP = N(6)-[(R)-lipoyl]-L-lysyl-[lipoyl-carrier protein] + AMP + diphosphate + H(+). Its pathway is protein modification; protein lipoylation via exogenous pathway; protein N(6)-(lipoyl)lysine from lipoate: step 1/2. It functions in the pathway protein modification; protein lipoylation via exogenous pathway; protein N(6)-(lipoyl)lysine from lipoate: step 2/2. Catalyzes both the ATP-dependent activation of exogenously supplied lipoate to lipoyl-AMP and the transfer of the activated lipoyl onto the lipoyl domains of lipoate-dependent enzymes. In Escherichia coli O1:K1 / APEC, this protein is Lipoate-protein ligase A.